The chain runs to 170 residues: Large ribosomal subunit protein uL5 (170 aa).

The protein belongs to the universal ribosomal protein uL5 family. Part of the 50S ribosomal subunit; contacts the 5S rRNA and probably tRNA. Forms a bridge to the 30S subunit in the 70S ribosome.

In terms of biological role, this is one of the proteins that bind and probably mediate the attachment of the 5S RNA into the large ribosomal subunit, where it forms part of the central protuberance. In the 70S ribosome it contacts protein S13 of the 30S subunit (bridge B1b), connecting the 2 subunits; this bridge is implicated in subunit movement. May contact the P site tRNA; the 5S rRNA and some of its associated proteins might help stabilize positioning of ribosome-bound tRNAs. The polypeptide is Large ribosomal subunit protein uL5 (Methanobrevibacter smithii (strain ATCC 35061 / DSM 861 / OCM 144 / PS)).